Reading from the N-terminus, the 510-residue chain is Cytochrome P450 monooxygenase macH (510 aa).

A helical transmembrane segment spans residues 7–29 (LPVSLWLIAAGTFAVYHAIRAVY). Cys454 lines the heme pocket.

Belongs to the cytochrome P450 family. Heme serves as cofactor.

It localises to the membrane. It participates in secondary metabolite biosynthesis; terpenoid biosynthesis. Its function is as follows. Cytochrome P450 monooxygenase; part of the gene cluster that mediates the biosynthesis of macrophorins, isoprenoid epoxycyclohexenones containing cyclized drimane moieties. The first step of the pathway is the synthesis of 6-methylsalicylic acid (6-MSA) by the polyketide synthase macA. 6-MSA is then converted to m-cresol by the decarboxylase macB. The cytochrome P450 monooxygenase macC then catalyzes the oxidation of m-cresol to toluquinol. Epoxidation of toluquinol is then performed by the short chain dehydrogenase macD, with the help of macE, and a further prenylation by macG leads to 7-deacetoxyyanuthone A. The next step is the hydroxylation of C-22 of 7-deacetoxyyanuthone A by the cytochrome P450 monooxygenase macH to yield 22-deacetylyanuthone A. O-Mevalon transferase macI then attaches mevalon to the hydroxyl group of 22-deacetylyanuthone A to produce yanuthone E. The terpene cyclase macJ catalyzes the cyclization of 22-deacetylyanuthone A to macrophorin A. MacJ is also able to catalyze cyclization of yanuthone E and 7-deacetoxyyanuthone A to their corresponding macrophorins. The macJ products can be further modified by macH and macJ, as well as by the FAD-dependent monooxygenase macF, to produce additional macrophorins, including 4'-oxomacrophorin A, 4'-oxomacrophorin D and 4'-oxomacrophorin E. The sequence is that of Cytochrome P450 monooxygenase macH from Penicillium terrestre.